Here is an 89-residue protein sequence, read N- to C-terminus: ATP synthase subunit c, sodium ion specific (89 aa).

Helical transmembrane passes span Val9–Gly29 and Gly68–Leu88.

This sequence belongs to the ATPase C chain family. F-type ATPases have 2 components, F(1) - the catalytic core - and F(0) - the membrane sodium channel. F(1) has five subunits: alpha(3), beta(3), gamma(1), delta(1), epsilon(1). F(0) has three main subunits: a(1), b(2) and c(10-14). The alpha and beta chains form an alternating ring which encloses part of the gamma chain. F(1) is attached to F(0) by a central stalk formed by the gamma and epsilon chains, while a peripheral stalk is formed by the delta and b chains.

It is found in the cell membrane. In terms of biological role, f(1)F(0) ATP synthase produces ATP from ADP in the presence of a proton or sodium gradient. F-type ATPases consist of two structural domains, F(1) containing the extramembraneous catalytic core and F(0) containing the membrane sodium channel, linked together by a central stalk and a peripheral stalk. During catalysis, ATP synthesis in the catalytic domain of F(1) is coupled via a rotary mechanism of the central stalk subunits to sodium translocation. Functionally, key component of the F(0) channel; it plays a direct role in translocation across the membrane. A homomeric c-ring of between 10-14 subunits forms the central stalk rotor element with the F(1) delta and epsilon subunits. The protein is ATP synthase subunit c, sodium ion specific (atpE) of Propionigenium modestum.